The sequence spans 38 residues: Large ribosomal subunit protein bL36 (38 aa).

The protein belongs to the bacterial ribosomal protein bL36 family.

This chain is Large ribosomal subunit protein bL36 (rpmJ), found in Streptococcus pneumoniae serotype 4 (strain ATCC BAA-334 / TIGR4).